A 406-amino-acid polypeptide reads, in one-letter code: Tyrosine--tRNA ligase (406 aa).

Tyr-35 provides a ligand contact to L-tyrosine. The short motif at 40–49 (PTADSLHVGH) is the 'HIGH' region element. 2 residues coordinate L-tyrosine: Tyr-168 and Gln-172. The short motif at 228 to 232 (KMGKT) is the 'KMSKS' region element. Lys-231 is an ATP binding site. The S4 RNA-binding domain occupies 340–404 (AELLDILVEA…RGKKNYNKIV (65 aa)).

The protein belongs to the class-I aminoacyl-tRNA synthetase family. TyrS type 1 subfamily. As to quaternary structure, homodimer.

It localises to the cytoplasm. The catalysed reaction is tRNA(Tyr) + L-tyrosine + ATP = L-tyrosyl-tRNA(Tyr) + AMP + diphosphate + H(+). Functionally, catalyzes the attachment of tyrosine to tRNA(Tyr) in a two-step reaction: tyrosine is first activated by ATP to form Tyr-AMP and then transferred to the acceptor end of tRNA(Tyr). The polypeptide is Tyrosine--tRNA ligase (Clostridium perfringens (strain 13 / Type A)).